A 1060-amino-acid chain; its full sequence is Carbamoyl phosphate synthase large chain (1060 aa).

A carboxyphosphate synthetic domain region spans residues 1-401 (MPKRTDIRKI…SLLKACRSLE (401 aa)). Arginine 129, arginine 169, glycine 175, glycine 176, arginine 208, isoleucine 210, glutamate 215, glycine 241, isoleucine 242, histidine 243, glutamine 284, and glutamate 298 together coordinate ATP. The region spanning 133–327 (KQLMEELNQP…IAKLAAKIAV (195 aa)) is the ATP-grasp 1 domain. Residues glutamine 284, glutamate 298, and asparagine 300 each coordinate Mg(2+). Glutamine 284, glutamate 298, and asparagine 300 together coordinate Mn(2+). Positions 402–546 (IGVDHIKIAD…YSTYAVENES (145 aa)) are oligomerization domain. The carbamoyl phosphate synthetic domain stretch occupies residues 547–929 (LISDKASILV…ALYKAFEAAY (383 aa)). The ATP-grasp 2 domain occupies 671–861 (EATLQALNIP…MAQVATKVIL (191 aa)). ATP contacts are provided by arginine 707, alanine 746, leucine 748, glutamate 752, glycine 777, valine 778, histidine 779, serine 780, glutamine 820, and glutamate 832. Residues glutamine 820, glutamate 832, and asparagine 834 each contribute to the Mg(2+) site. Mn(2+) contacts are provided by glutamine 820, glutamate 832, and asparagine 834. Positions 930–1060 (LHMPDYGNIV…SRAFTLKVLD (131 aa)) constitute an MGS-like domain. Positions 930–1060 (LHMPDYGNIV…SRAFTLKVLD (131 aa)) are allosteric domain.

The protein belongs to the CarB family. In terms of assembly, composed of two chains; the small (or glutamine) chain promotes the hydrolysis of glutamine to ammonia, which is used by the large (or ammonia) chain to synthesize carbamoyl phosphate. Tetramer of heterodimers (alpha,beta)4. Requires Mg(2+) as cofactor. Mn(2+) serves as cofactor.

The enzyme catalyses hydrogencarbonate + L-glutamine + 2 ATP + H2O = carbamoyl phosphate + L-glutamate + 2 ADP + phosphate + 2 H(+). It catalyses the reaction hydrogencarbonate + NH4(+) + 2 ATP = carbamoyl phosphate + 2 ADP + phosphate + 2 H(+). Its pathway is amino-acid biosynthesis; L-arginine biosynthesis; carbamoyl phosphate from bicarbonate: step 1/1. The protein operates within pyrimidine metabolism; UMP biosynthesis via de novo pathway; (S)-dihydroorotate from bicarbonate: step 1/3. Large subunit of the glutamine-dependent carbamoyl phosphate synthetase (CPSase). CPSase catalyzes the formation of carbamoyl phosphate from the ammonia moiety of glutamine, carbonate, and phosphate donated by ATP, constituting the first step of 2 biosynthetic pathways, one leading to arginine and/or urea and the other to pyrimidine nucleotides. The large subunit (synthetase) binds the substrates ammonia (free or transferred from glutamine from the small subunit), hydrogencarbonate and ATP and carries out an ATP-coupled ligase reaction, activating hydrogencarbonate by forming carboxy phosphate which reacts with ammonia to form carbamoyl phosphate. In Streptococcus agalactiae serotype V (strain ATCC BAA-611 / 2603 V/R), this protein is Carbamoyl phosphate synthase large chain.